Here is a 410-residue protein sequence, read N- to C-terminus: Histidine--tRNA ligase (410 aa).

It belongs to the class-II aminoacyl-tRNA synthetase family. Homodimer.

Its subcellular location is the cytoplasm. It catalyses the reaction tRNA(His) + L-histidine + ATP = L-histidyl-tRNA(His) + AMP + diphosphate + H(+). The chain is Histidine--tRNA ligase from Campylobacter hominis (strain ATCC BAA-381 / DSM 21671 / CCUG 45161 / LMG 19568 / NCTC 13146 / CH001A).